The sequence spans 189 residues: uncharacterized protein (189 aa).

The next 3 helical transmembrane spans lie at 2 to 22 (LVVV…HHLL), 93 to 113 (ILFY…YFIL), and 116 to 136 (FYST…LHTL).

It is found in the membrane. This is an uncharacterized protein from Schizosaccharomyces pombe (strain 972 / ATCC 24843) (Fission yeast).